We begin with the raw amino-acid sequence, 209 residues long: FMN-dependent NADH:quinone oxidoreductase (209 aa).

Residues S18, M102–F105, and S146–G149 each bind FMN.

The protein belongs to the azoreductase type 1 family. Homodimer. FMN serves as cofactor.

It catalyses the reaction 2 a quinone + NADH + H(+) = 2 a 1,4-benzosemiquinone + NAD(+). The enzyme catalyses N,N-dimethyl-1,4-phenylenediamine + anthranilate + 2 NAD(+) = 2-(4-dimethylaminophenyl)diazenylbenzoate + 2 NADH + 2 H(+). Its function is as follows. Quinone reductase that provides resistance to thiol-specific stress caused by electrophilic quinones. In terms of biological role, also exhibits azoreductase activity. Catalyzes the reductive cleavage of the azo bond in aromatic azo compounds to the corresponding amines. This chain is FMN-dependent NADH:quinone oxidoreductase, found in Saccharophagus degradans (strain 2-40 / ATCC 43961 / DSM 17024).